A 148-amino-acid chain; its full sequence is Arginine repressor (148 aa).

This sequence belongs to the ArgR family.

The protein localises to the cytoplasm. It functions in the pathway amino-acid biosynthesis; L-arginine biosynthesis [regulation]. Its function is as follows. Regulates arginine biosynthesis genes. This chain is Arginine repressor, found in Chlorobium chlorochromatii (strain CaD3).